Reading from the N-terminus, the 392-residue chain is Phosphoglycerate kinase (392 aa).

Substrate contacts are provided by residues 21 to 23, Arg-36, 59 to 62, Arg-118, and Arg-151; these read DFN and HLGR. ATP contacts are provided by residues Lys-201, Gly-292, Glu-323, and 349-352; that span reads GGDS.

This sequence belongs to the phosphoglycerate kinase family. Monomer.

The protein resides in the cytoplasm. It carries out the reaction (2R)-3-phosphoglycerate + ATP = (2R)-3-phospho-glyceroyl phosphate + ADP. It participates in carbohydrate degradation; glycolysis; pyruvate from D-glyceraldehyde 3-phosphate: step 2/5. This is Phosphoglycerate kinase from Borrelia turicatae (strain 91E135).